The sequence spans 678 residues: Exoribonuclease 2 (678 aa).

An RNB domain is found at 193-521; it reads REDLTALPFV…INHRLLKAHI (329 aa). Residues 568-650 form the S1 motif domain; sequence ETRFQAEIFD…ENRSLVGKPT (83 aa). The disordered stretch occupies residues 659-678; it reads ETQTSAEQPAEGAENNEPQV.

It belongs to the RNR ribonuclease family. RNase II subfamily.

Its subcellular location is the cytoplasm. It catalyses the reaction Exonucleolytic cleavage in the 3'- to 5'-direction to yield nucleoside 5'-phosphates.. Functionally, involved in mRNA degradation. Hydrolyzes single-stranded polyribonucleotides processively in the 3' to 5' direction. The polypeptide is Exoribonuclease 2 (Vibrio cholerae serotype O1 (strain ATCC 39315 / El Tor Inaba N16961)).